Here is a 476-residue protein sequence, read N- to C-terminus: Bifunctional protein GlmU (476 aa).

The segment at 1–235 is pyrophosphorylase; sequence MTALDIIIMA…ALQVAGVNSP (235 aa). UDP-N-acetyl-alpha-D-glucosamine-binding positions include K23, Q81, 86–87, 108–110, G145, E160, and N233; these read GT and SGD. D110 serves as a coordination point for Mg(2+). N233 is a Mg(2+) binding site. The linker stretch occupies residues 236 to 256; that stretch reads AQLAELERAHQRAQAAALMEQ. The segment at 257 to 476 is N-acetyltransferase; sequence GVRLADPARF…WKRPAKQAKG (220 aa). 2 residues coordinate UDP-N-acetyl-alpha-D-glucosamine: R351 and K369. The active-site Proton acceptor is the H381. UDP-N-acetyl-alpha-D-glucosamine contacts are provided by Y384 and N395. Acetyl-CoA is bound by residues A398, 404 to 405, S423, G441, and R458; that span reads NY.

It in the N-terminal section; belongs to the N-acetylglucosamine-1-phosphate uridyltransferase family. This sequence in the C-terminal section; belongs to the transferase hexapeptide repeat family. As to quaternary structure, homotrimer. It depends on Mg(2+) as a cofactor.

It localises to the cytoplasm. It catalyses the reaction alpha-D-glucosamine 1-phosphate + acetyl-CoA = N-acetyl-alpha-D-glucosamine 1-phosphate + CoA + H(+). The enzyme catalyses N-acetyl-alpha-D-glucosamine 1-phosphate + UTP + H(+) = UDP-N-acetyl-alpha-D-glucosamine + diphosphate. It functions in the pathway nucleotide-sugar biosynthesis; UDP-N-acetyl-alpha-D-glucosamine biosynthesis; N-acetyl-alpha-D-glucosamine 1-phosphate from alpha-D-glucosamine 6-phosphate (route II): step 2/2. It participates in nucleotide-sugar biosynthesis; UDP-N-acetyl-alpha-D-glucosamine biosynthesis; UDP-N-acetyl-alpha-D-glucosamine from N-acetyl-alpha-D-glucosamine 1-phosphate: step 1/1. Its pathway is bacterial outer membrane biogenesis; LPS lipid A biosynthesis. Its function is as follows. Catalyzes the last two sequential reactions in the de novo biosynthetic pathway for UDP-N-acetylglucosamine (UDP-GlcNAc). The C-terminal domain catalyzes the transfer of acetyl group from acetyl coenzyme A to glucosamine-1-phosphate (GlcN-1-P) to produce N-acetylglucosamine-1-phosphate (GlcNAc-1-P), which is converted into UDP-GlcNAc by the transfer of uridine 5-monophosphate (from uridine 5-triphosphate), a reaction catalyzed by the N-terminal domain. This Acidovorax ebreus (strain TPSY) (Diaphorobacter sp. (strain TPSY)) protein is Bifunctional protein GlmU.